The sequence spans 743 residues: Inhibitor of nuclear factor kappa-B kinase subunit alpha (743 aa).

A Protein kinase domain is found at tryptophan 15–valine 300. ATP is bound by residues leucine 21–valine 29 and lysine 44. The Proton acceptor role is filled by aspartate 144. Residues leucine 453–leucine 474 form a leucine-zipper region. The tract at residues leucine 736–leucine 741 is NEMO-binding.

The protein belongs to the protein kinase superfamily. Ser/Thr protein kinase family. I-kappa-B kinase subfamily.

The protein resides in the cytoplasm. The protein localises to the nucleus. The catalysed reaction is L-seryl-[I-kappa-B protein] + ATP = O-phospho-L-seryl-[I-kappa-B protein] + ADP + H(+). With respect to regulation, activated when phosphorylated and inactivated when dephosphorylated. Functionally, phosphorylates inhibitors of NF-kappa-B thus leading to the dissociation of the inhibitor/NF-kappa-B complex and ultimately the degradation of the inhibitor. Phosphorylates 'Ser-10' of histone H3 at NF-kappa-B-regulated promoters during inflammatory responses triggered by cytokines. The chain is Inhibitor of nuclear factor kappa-B kinase subunit alpha (chuk) from Xenopus tropicalis (Western clawed frog).